Consider the following 434-residue polypeptide: Arrestin domain-containing protein 1 (434 aa).

Residues 295–345 (PGPGSSPGLLSPVVPSAPPQEEAEAVASGPHFSDPVSLSTKSHSQQQPLST) form a disordered region. Polar residues predominate over residues 330–342 (VSLSTKSHSQQQP). Short sequence motifs (PPxY motif) lie at residues 401-404 (PPEY) and 414-417 (PPSY).

The protein belongs to the arrestin family. Interacts (via PPxY motifs) with ITCH (via WW domains); the interaction is direct and participates in the recruitment of the ubiquitin-protein ligase ITCH to the NOTCH1 receptor. Interacts with ARRB1 and ARRB2; the interaction is direct. Interacts with TSG101; may recruit TSG101 to the plasma membrane. Interacts (via PPxY motifs) with WWP2 (via WW domains); ubiquitinates ARRDC1. Interacts with SLC11A2; controls the incorporation of SLC11A2 into extracellular vesicles through an ubiquitination-dependent mechanism. Interacts with WWP1 (via WW domains). Interacts with NEDD4 (via WW domains). Interacts with PDCD6IP. Post-translationally, ubiquitinated. Ubiquitination by WWP2; promotes localization to extracellular microvesicles. Ubiquitinated by WWP1.

The protein localises to the cell membrane. Its function is as follows. Functions as an adapter recruiting ubiquitin-protein ligases to their specific substrates. Through an ubiquitination-dependent mechanism plays for instance a role in the incorporation of SLC11A2 into extracellular vesicles. More generally, plays a role in the extracellular transport of proteins between cells through the release in the extracellular space of microvesicles. By participating in the ITCH-mediated ubiquitination and subsequent degradation of NOTCH1, negatively regulates the NOTCH signaling pathway. The chain is Arrestin domain-containing protein 1 from Rattus norvegicus (Rat).